A 155-amino-acid chain; its full sequence is Small ribosomal subunit protein uS7 (155 aa).

It belongs to the universal ribosomal protein uS7 family. In terms of assembly, part of the 30S ribosomal subunit. Contacts proteins S9 and S11.

Its function is as follows. One of the primary rRNA binding proteins, it binds directly to 16S rRNA where it nucleates assembly of the head domain of the 30S subunit. Is located at the subunit interface close to the decoding center, probably blocks exit of the E-site tRNA. This Helicobacter pylori (strain Shi470) protein is Small ribosomal subunit protein uS7.